The chain runs to 387 residues: Patatin-01 (387 aa).

An N-terminal signal peptide occupies residues 1–23 (MATTKSFLILSVMILATTSSTFA). The 199-residue stretch at 32-230 (LSIDGGGIKG…TVADPALLSV (199 aa)) folds into the PNPLA domain. The GXGXXG signature appears at 36–41 (GGGIKG). Positions 75–79 (GTSTG) match the GXSXG motif. Ser-77 (nucleophile) is an active-site residue. A glycan (N-linked (GlcNAc...) asparagine) is linked at Asn-115. Asp-216 functions as the Proton acceptor in the catalytic mechanism. Residues 216–218 (DGA) carry the DGA/G motif. Positions 361 to 385 (ETYEEALKRFAKLLSDRKKLRANKA) form a coiled coil.

Belongs to the patatin family. In terms of tissue distribution, tuber.

The protein resides in the vacuole. In terms of biological role, probable lipolytic acyl hydrolase (LAH), an activity which is thought to be involved in the response of tubers to pathogens. The protein is Patatin-01 of Solanum tuberosum (Potato).